A 221-amino-acid chain; its full sequence is Tetraspanin-2 (221 aa).

Topologically, residues 1–13 (MGRFRGGLRCIKY) are cytoplasmic. Residues 14–34 (LLLGFNLLFWLAGSAVIAFGL) form a helical membrane-spanning segment. Over 35 to 54 (WFRFGGTIKDLSSEEKSPEY) the chain is Extracellular. A helical membrane pass occupies residues 55-75 (FYVGLYVLVGAGALMMAVGFF). Residues 76–90 (GCCGAMRESQCVLGS) lie on the Cytoplasmic side of the membrane. Residues 91–111 (FFTCLLVIFAAEVTTGVFAFI) form a helical membrane-spanning segment. Residues 112-188 (GKDVAIRHVQ…ETIISVKLQL (77 aa)) are Extracellular-facing. Residue N139 is glycosylated (N-linked (GlcNAc...) asparagine). Residues 189–209 (IGIVGIGIAGLTIFGMIFSMV) form a helical membrane-spanning segment. Residues 210–221 (LCCAIRNSRDVI) are Cytoplasmic-facing.

It belongs to the tetraspanin (TM4SF) family. In terms of tissue distribution, expression is restricted to the nervous system.

The protein localises to the membrane. May play a role in signalling in oligodendrocytes in the early stages of their terminal differentiation into myelin-forming glia and may also function in stabilizing the mature sheath. In Rattus norvegicus (Rat), this protein is Tetraspanin-2 (Tspan2).